A 104-amino-acid chain; its full sequence is Iron-sulfur cluster assembly protein CyaY (104 aa).

It belongs to the frataxin family.

Functionally, involved in iron-sulfur (Fe-S) cluster assembly. May act as a regulator of Fe-S biogenesis. The protein is Iron-sulfur cluster assembly protein CyaY of Vibrio vulnificus (strain CMCP6).